Reading from the N-terminus, the 139-residue chain is Putative pre-16S rRNA nuclease (139 aa).

Belongs to the YqgF nuclease family.

The protein resides in the cytoplasm. Could be a nuclease involved in processing of the 5'-end of pre-16S rRNA. This chain is Putative pre-16S rRNA nuclease, found in Streptococcus gordonii (strain Challis / ATCC 35105 / BCRC 15272 / CH1 / DL1 / V288).